We begin with the raw amino-acid sequence, 396 residues long: S-adenosylmethionine synthase (396 aa).

His16 is an ATP binding site. A Mg(2+)-binding site is contributed by Asp18. K(+) is bound at residue Glu44. Positions 57 and 100 each coordinate L-methionine. Positions 100-110 (QSQDIARGVDN) are flexible loop. ATP is bound by residues 162–164 (DGK), 228–229 (RF), Asp237, 243–244 (RK), Ala260, and Lys264. Asp237 contributes to the L-methionine binding site. Lys268 serves as a coordination point for L-methionine.

The protein belongs to the AdoMet synthase family. Homotetramer; dimer of dimers. It depends on Mg(2+) as a cofactor. K(+) serves as cofactor.

It localises to the cytoplasm. It catalyses the reaction L-methionine + ATP + H2O = S-adenosyl-L-methionine + phosphate + diphosphate. Its pathway is amino-acid biosynthesis; S-adenosyl-L-methionine biosynthesis; S-adenosyl-L-methionine from L-methionine: step 1/1. Functionally, catalyzes the formation of S-adenosylmethionine (AdoMet) from methionine and ATP. The overall synthetic reaction is composed of two sequential steps, AdoMet formation and the subsequent tripolyphosphate hydrolysis which occurs prior to release of AdoMet from the enzyme. The sequence is that of S-adenosylmethionine synthase from Myxococcus xanthus (strain DK1622).